The primary structure comprises 397 residues: L-asparaginase-like protein CG4372 (397 aa).

The first 22 residues, 1–22 (MLAQSCCLRLLILLLLFTTIGS), serve as a signal peptide directing secretion. 3 disulfides stabilise this stretch: Cys-90–Cys-95, Cys-189–Cys-205, and Cys-344–Cys-371.

Belongs to the Ntn-hydrolase family.

This Drosophila melanogaster (Fruit fly) protein is L-asparaginase-like protein CG4372.